The primary structure comprises 190 residues: B3 domain-containing protein At1g49475 (190 aa).

The segment at 1–27 (MRNMHTNRRSPGPITSAATQRRLKPEP) is disordered. The segment at residues 33–125 (KFIKIILLSR…CFRVVIFDVS (93 aa)) is a DNA-binding region (TF-B3).

The protein localises to the nucleus. This is B3 domain-containing protein At1g49475 from Arabidopsis thaliana (Mouse-ear cress).